The following is a 563-amino-acid chain: Arginine--tRNA ligase (563 aa).

Residues 137–147 carry the 'HIGH' region motif; the sequence is ANPTGLLHMGN.

This sequence belongs to the class-I aminoacyl-tRNA synthetase family. As to quaternary structure, monomer.

The protein localises to the cytoplasm. It catalyses the reaction tRNA(Arg) + L-arginine + ATP = L-arginyl-tRNA(Arg) + AMP + diphosphate. In Desulforudis audaxviator (strain MP104C), this protein is Arginine--tRNA ligase.